Reading from the N-terminus, the 83-residue chain is Small ribosomal subunit protein eS21 (83 aa).

Belongs to the eukaryotic ribosomal protein eS21 family. As to quaternary structure, component of the 40S small ribosomal subunit. Interacts with sta.

The protein localises to the cytoplasm. Its subcellular location is the cytosol. It is found in the rough endoplasmic reticulum. Functionally, may be an associated component of the ribosome rather than a core structural subunit. May act as a translation initiation factor. Has a role in regulation of cell proliferation in the hematopoietic organs and the imaginal disks of larva. This is Small ribosomal subunit protein eS21 (RpS21) from Drosophila erecta (Fruit fly).